Reading from the N-terminus, the 381-residue chain is Anhydro-N-acetylmuramic acid kinase (381 aa).

13-20 (GTSLDGID) serves as a coordination point for ATP.

It belongs to the anhydro-N-acetylmuramic acid kinase family.

It catalyses the reaction 1,6-anhydro-N-acetyl-beta-muramate + ATP + H2O = N-acetyl-D-muramate 6-phosphate + ADP + H(+). The protein operates within amino-sugar metabolism; 1,6-anhydro-N-acetylmuramate degradation. It participates in cell wall biogenesis; peptidoglycan recycling. Functionally, catalyzes the specific phosphorylation of 1,6-anhydro-N-acetylmuramic acid (anhMurNAc) with the simultaneous cleavage of the 1,6-anhydro ring, generating MurNAc-6-P. Is required for the utilization of anhMurNAc either imported from the medium or derived from its own cell wall murein, and thus plays a role in cell wall recycling. This is Anhydro-N-acetylmuramic acid kinase from Francisella tularensis subsp. novicida (strain U112).